Reading from the N-terminus, the 295-residue chain is 4-hydroxy-tetrahydrodipicolinate synthase (295 aa).

Thr-47 lines the pyruvate pocket. The active-site Proton donor/acceptor is Tyr-135. The active-site Schiff-base intermediate with substrate is Lys-163. Pyruvate is bound at residue Ile-206.

In terms of assembly, homodimer. In fact, exists in a monomer-dimer equilibrium in solution, shifted in favor of the dimer in presence of the substrate pyruvate; the monomer has significantly reduced activity compared with the dimer.

It is found in the cytoplasm. It catalyses the reaction L-aspartate 4-semialdehyde + pyruvate = (2S,4S)-4-hydroxy-2,3,4,5-tetrahydrodipicolinate + H2O + H(+). The protein operates within amino-acid biosynthesis; L-lysine biosynthesis via DAP pathway; (S)-tetrahydrodipicolinate from L-aspartate: step 3/4. Its activity is regulated as follows. Is insensitive to lysine-feedback inhibition. Shows ASA substrate inhibition. Functionally, catalyzes the condensation of (S)-aspartate-beta-semialdehyde [(S)-ASA] and pyruvate to 4-hydroxy-tetrahydrodipicolinate (HTPA). This chain is 4-hydroxy-tetrahydrodipicolinate synthase, found in Staphylococcus aureus (strain MRSA252).